A 223-amino-acid chain; its full sequence is 2-C-methyl-D-erythritol 4-phosphate cytidylyltransferase (223 aa).

It belongs to the IspD/TarI cytidylyltransferase family. IspD subfamily.

It catalyses the reaction 2-C-methyl-D-erythritol 4-phosphate + CTP + H(+) = 4-CDP-2-C-methyl-D-erythritol + diphosphate. It functions in the pathway isoprenoid biosynthesis; isopentenyl diphosphate biosynthesis via DXP pathway; isopentenyl diphosphate from 1-deoxy-D-xylulose 5-phosphate: step 2/6. Its function is as follows. Catalyzes the formation of 4-diphosphocytidyl-2-C-methyl-D-erythritol from CTP and 2-C-methyl-D-erythritol 4-phosphate (MEP). This is 2-C-methyl-D-erythritol 4-phosphate cytidylyltransferase from Prochlorococcus marinus (strain MIT 9215).